A 316-amino-acid polypeptide reads, in one-letter code: Low affinity immunoglobulin gamma Fc region receptor II-a (316 aa).

Residues 1-35 (MAMETQMSQNVCPRNLWLLQPLTVLLLLASADSQA) form the signal peptide. The Extracellular portion of the chain corresponds to 36–216 (APPKAVLKLE…PSVGSSSPVG (181 aa)). Ig-like C2-type domains are found at residues 38 to 117 (PKAV…VHLT) and 121 to 203 (EWLV…VTIT). Cystine bridges form between cysteine 61–cysteine 103 and cysteine 142–cysteine 186. N-linked (GlcNAc...) asparagine glycosylation is found at asparagine 96, asparagine 170, and asparagine 177. The helical transmembrane segment at 217-239 (IIVAVVIATAVAAIVAAVVALIY) threads the bilayer. Over 240–316 (CRKKRISANS…PPNDHVNSNN (77 aa)) the chain is Cytoplasmic. Phosphotyrosine; by SRC-type Tyr-kinases is present on residues tyrosine 287 and tyrosine 303.

Interacts with INPP5D/SHIP1 and INPPL1/SHIP2, regulating its function. Interacts with APCS and FGR. Interacts with HCK. Phosphorylated by SRC-type Tyr-kinases such as HCK, LYN, BLK, FYN and SYK.

The protein resides in the cell membrane. Binds to the Fc region of immunoglobulins gamma. Low affinity receptor. By binding to IgG it initiates cellular responses against pathogens and soluble antigens. Promotes phagocytosis of opsonized antigens. The sequence is that of Low affinity immunoglobulin gamma Fc region receptor II-a (FCGR2A) from Pan troglodytes (Chimpanzee).